The chain runs to 230 residues: Orotidine 5'-phosphate decarboxylase (230 aa).

Substrate contacts are provided by residues Asp-10, Lys-31, 58–67 (DLKLHDIPNT), Thr-117, Arg-179, Gln-188, Gly-208, and Arg-209. Residue Lys-60 is the Proton donor of the active site.

It belongs to the OMP decarboxylase family. Type 1 subfamily. As to quaternary structure, homodimer.

It carries out the reaction orotidine 5'-phosphate + H(+) = UMP + CO2. Its pathway is pyrimidine metabolism; UMP biosynthesis via de novo pathway; UMP from orotate: step 2/2. Its function is as follows. Catalyzes the decarboxylation of orotidine 5'-monophosphate (OMP) to uridine 5'-monophosphate (UMP). The protein is Orotidine 5'-phosphate decarboxylase of Staphylococcus haemolyticus (strain JCSC1435).